We begin with the raw amino-acid sequence, 366 residues long: MERGSRDHHRDHRDHREHRELREPPTLAFHMKSWKTINKPLKAFTKLLKENTTVTFTPQPSIIIQSAKNHLVQKLTIQAECLFLSDTEHFLTKTINNHIPLFESFMNIISNPEVTKLYIQHDSDLYTRVLVTASDTCTQASVPCVHGQEVVRDSGKSPLRIDLDHSTVSEVLKWLSPVTKTKRSGKSDAFMAHIIVQVNPPTIKFVTEMNELEFSNSNKVIFYDVNNMRFNLSAKNLQQALSMCAVIKTSCSLRTVAAKDCKLILTSKSTLLTVEAFLTQEQLKEESRFERMGKQDDGKGDRNHKNEDGSALASKQETQYKITNYMVPTKNGTAGSSLFNEKEDSESDDSMHFEYSSNPKRQRCVV.

The segment covering 1 to 16 has biased composition (basic residues); the sequence is MERGSRDHHRDHRDHR. 2 disordered regions span residues 1-25 and 286-366; these read MERG…REPP and ESRF…RCVV. A compositionally biased stretch (basic and acidic residues) spans 286 to 308; sequence ESRFERMGKQDDGKGDRNHKNED. Polar residues-rich tracts occupy residues 313 to 322 and 330 to 339; these read ASKQETQYKI and KNGTAGSSLF.

This sequence belongs to the herpesviridae polymerase accessory protein family.

In terms of biological role, accessory subunit of the DNA polymerase that acts to increase the processivity of polymerization. In Homo sapiens (Human), this protein is DNA polymerase processivity factor (U27).